A 93-amino-acid polypeptide reads, in one-letter code: Molybdopterin synthase sulfur carrier subunit (93 aa).

G93 is subject to 1-thioglycine; alternate. The residue at position 93 (G93) is a Glycyl adenylate; alternate.

This sequence belongs to the MoaD family. MOCS2A subfamily. As to quaternary structure, heterotetramer; composed of 2 small (MOCS2A) and 2 large (MOCS2B) subunits. C-terminal thiocarboxylation occurs in 2 steps, it is first acyl-adenylated (-COAMP) via the hesA/moeB/thiF part of uba4, then thiocarboxylated (-COSH) via the rhodanese domain of uba4.

It localises to the cytoplasm. It participates in cofactor biosynthesis; molybdopterin biosynthesis. Functionally, acts as a sulfur carrier required for molybdopterin biosynthesis. Component of the molybdopterin synthase complex that catalyzes the conversion of precursor Z into molybdopterin by mediating the incorporation of 2 sulfur atoms into precursor Z to generate a dithiolene group. In the complex, serves as sulfur donor by being thiocarboxylated (-COSH) at its C-terminus by uba4. After interaction with MOCS2B, the sulfur is then transferred to precursor Z to form molybdopterin. This Pyrenophora tritici-repentis (strain Pt-1C-BFP) (Wheat tan spot fungus) protein is Molybdopterin synthase sulfur carrier subunit.